Reading from the N-terminus, the 130-residue chain is Small ribosomal subunit protein uS11 (130 aa).

This sequence belongs to the universal ribosomal protein uS11 family. In terms of assembly, part of the 30S ribosomal subunit. Interacts with proteins S7 and S18. Binds to IF-3.

Located on the platform of the 30S subunit, it bridges several disparate RNA helices of the 16S rRNA. Forms part of the Shine-Dalgarno cleft in the 70S ribosome. In Gloeothece citriformis (strain PCC 7424) (Cyanothece sp. (strain PCC 7424)), this protein is Small ribosomal subunit protein uS11.